Here is a 130-residue protein sequence, read N- to C-terminus: Holo-[acyl-carrier-protein] synthase (130 aa).

Positions 9 and 58 each coordinate Mg(2+).

It belongs to the P-Pant transferase superfamily. AcpS family. It depends on Mg(2+) as a cofactor.

It is found in the cytoplasm. The catalysed reaction is apo-[ACP] + CoA = holo-[ACP] + adenosine 3',5'-bisphosphate + H(+). In terms of biological role, transfers the 4'-phosphopantetheine moiety from coenzyme A to a Ser of acyl-carrier-protein. This chain is Holo-[acyl-carrier-protein] synthase, found in Mycobacterium marinum (strain ATCC BAA-535 / M).